Reading from the N-terminus, the 82-residue chain is RNA-binding protein Hfq (82 aa).

Residues 11-71 enclose the Sm domain; the sequence is DTFLNHVRKT…ISTIMPGAPI (61 aa).

Belongs to the Hfq family. As to quaternary structure, homohexamer.

Its function is as follows. RNA chaperone that binds small regulatory RNA (sRNAs) and mRNAs to facilitate mRNA translational regulation in response to envelope stress, environmental stress and changes in metabolite concentrations. Also binds with high specificity to tRNAs. The chain is RNA-binding protein Hfq from Bradyrhizobium diazoefficiens (strain JCM 10833 / BCRC 13528 / IAM 13628 / NBRC 14792 / USDA 110).